Reading from the N-terminus, the 541-residue chain is Calcium-dependent protein kinase 26 (541 aa).

Positions 1–11 are enriched in gly residues; it reads MGQCCTGGGKA. The interval 1 to 74 is disordered; it reads MGQCCTGGGK…AGPIGEVLER (74 aa). Glycine 2 is lipidated: N-myristoyl glycine. Residues 38 to 67 show a composition bias toward low complexity; the sequence is AKQQPCSPAAKAAATEAAAAASSSKKPAGP. One can recognise a Protein kinase domain in the interval 83 to 341; that stretch reads YSIGKELGRG…AFQVLNHPWI (259 aa). Residues 89 to 97 and lysine 112 each bind ATP; that span reads LGRGQFGVT. Catalysis depends on aspartate 207, which acts as the Proton acceptor. Residues 347-377 are autoinhibitory domain; sequence APDVPLDNVVLNRLKQFRAMNQFKKAALRII. EF-hand domains follow at residues 384-419, 420-455, 456-491, and 493-526; these read EEIK…QGTK, FSDN…MNKM, DREE…QGLY, and ANEI…GSGC. Ca(2+) is bound by residues aspartate 397, aspartate 399, serine 401, threonine 403, glutamate 408, aspartate 433, aspartate 435, asparagine 437, glutamate 444, aspartate 469, aspartate 471, serine 473, tyrosine 475, glutamate 480, aspartate 504, asparagine 506, aspartate 508, arginine 510, and glutamate 515.

It belongs to the protein kinase superfamily. Ser/Thr protein kinase family. CDPK subfamily. Specifically expressed in heading panicles, spikelets and mature pollen grains. Not expressed in vegetative tissues.

The protein resides in the membrane. The catalysed reaction is L-seryl-[protein] + ATP = O-phospho-L-seryl-[protein] + ADP + H(+). It carries out the reaction L-threonyl-[protein] + ATP = O-phospho-L-threonyl-[protein] + ADP + H(+). Activated by calcium. Autophosphorylation may play an important role in the regulation of the kinase activity. Functionally, may play a role in signal transduction pathways that involve calcium as a second messenger. In Oryza sativa subsp. japonica (Rice), this protein is Calcium-dependent protein kinase 26.